Consider the following 558-residue polypeptide: MGAAEPRMEVCPYCKKPFKRLKSHLPHCKMRGPSISADQNVSQSKPAALAQKEKSPTRDLTRAKEKELEVDRPKRAVKAETSRASWTAAASPLPEGILGSVRITKAEGENKDQNQFSFQALSQAKPEVTLQRVTTPWSPASDATSPKRELTQDVSESKGSPCPSETEAPSLVSSVEPFLANQDRKYSSTQPHANPATSVGLKLGTVDPQRQKLRVKLLDVPLSDRHSPKSGSHGVQRVTPSVLSREEGSQDGGHLLGVSAHPGNTKTQKSESLLLGLHTGLLGKAPVREHQELGLGMELSQSKGNTENRMSVTNVQEGAGLGQGGKDPITATKAKPHTALELRNVFMPESGNQSLTSPAVTSTPEENAQFCGQSHVPAITLSVGSVRDVLEPTSFYQPHTAQAGHCLMSYSAQYPVPKTFVGHVAAVTSGAPPRSVGLEWFPELYPAYVGLGVLPRRPPPWSLAAQVPPLPTLQGRSVSKVPWWGRSSADSRSLEPLTLTTSSLPLMRLLGAVHKGWVQCNTTIKKSGVGGLTMLFAGYFILCCNWSFKHLKLQHWRK.

The Extracellular segment spans residues 1 to 527; that stretch reads MGAAEPRMEV…VQCNTTIKKS (527 aa). Disordered stretches follow at residues 29-88, 130-205, and 222-269; these read KMRG…SWTA, LQRV…KLGT, and LSDR…KTQK. Residues 36–45 show a composition bias toward polar residues; sequence SADQNVSQSK. Positions 51–81 are enriched in basic and acidic residues; it reads QKEKSPTRDLTRAKEKELEVDRPKRAVKAET. Polar residues-rich tracts occupy residues 131–144 and 187–197; these read QRVTTPWSPASDAT and SSTQPHANPAT. The helical transmembrane segment at 528-548 threads the bilayer; the sequence is GVGGLTMLFAGYFILCCNWSF. The Cytoplasmic portion of the chain corresponds to 549-558; that stretch reads KHLKLQHWRK.

The protein resides in the mitochondrion inner membrane. Its subcellular location is the mitochondrion matrix. It localises to the mitochondrion nucleoid. In terms of biological role, critical regulator of mitochondrial DNA (mtDNA) abundance. Binds dsDNA throughout the mitochondrial genome without sequence specificity and controls mtDNA copy number by promoting its replication. Also plays important roles in mitochondrial metabolism and cell proliferation. This Mus musculus (Mouse) protein is Mitochondrial nucleoid-associated protein 1.